A 568-amino-acid chain; its full sequence is MKCSFHIPEKYQWASTLFVHVALIAGVAVYTVFGALSMQWLESPDRVRALLKRELKPVESLPPPPSISGLPDRITRVYLGEELAILDPGVHECLERTILTLFHDTKCDPYSFEHLNIELIDRCYAEANVPIPEGYGGQPRKKIKNKEEEKDVIDETPAEKWSIGNSVIFAFTVITTIGYGHVAPETFEGRLFLIFYGVIGVPFTLLTIADLGMFLTRFLKNLLTMARRFAHYLVKLYQKAKKQRNKSQKTSPVMPDSERSEVWNTGKEMKEMSMRTAREPGEGDEIEVIENGNDENGKEEDEEEPENNEPRKTEESIALGITFTCYLVAGAKILSVYEPEMDFFKALYFNFVTLTTIGLGDFVPKSFDYLLITLIYIGIGLALTTMAIEIAADLLKKLHYIGRKMENVGQAVVWFGGKKMTMKSLVKHLGDQFNIPEEELANFDMSAFVDNAIKVEKGEIATLRKPPTPPVVFRERAFSFSNVRNSSESALKYVDDNRFSKTTQPTIYTVIIHETTRTIDTLHNLADAIRRDPSIPRLDLDVHYLTDMSAPTSFDENYLRTYTNARRK.

Residues M1–S15 lie on the Cytoplasmic side of the membrane. A helical membrane pass occupies residues T16–L36. An intramembrane region (pore-forming) is located at residues I163–A183. Residues L191–L211 traverse the membrane as a helical segment. Topologically, residues G212–S316 are cytoplasmic. 2 disordered regions span residues Q243–V262 and M274–E314. The span at G297–N307 shows a compositional bias: acidic residues. The chain crosses the membrane as a helical span at residues I317–Y337. An intramembrane region (pore-forming) is located at residues F343 to V363. Residues L370–I390 traverse the membrane as a helical segment. The Cytoplasmic segment spans residues A391 to K568.

The protein belongs to the two pore domain potassium channel (TC 1.A.1.8) family. Expressed in ray A-type neurons and cell bodies. Also seen in head, pharyngeal and phasmid neurons, and in coelomocytes.

It localises to the membrane. Potassium channel protein that may be component of regulatory network that controls ray development and function. The polypeptide is TWiK family of potassium channels protein 9 (twk-9) (Caenorhabditis elegans).